The primary structure comprises 571 residues: Glutamate--tRNA ligase (571 aa).

The 'HIGH' region signature appears at 114-124 (PNPNGPWHVGH). The segment at 431–453 (KPLAGGPESASPPLHPNDEDRGR) is disordered.

This sequence belongs to the class-I aminoacyl-tRNA synthetase family. Glutamate--tRNA ligase type 2 subfamily.

The protein resides in the cytoplasm. It catalyses the reaction tRNA(Glu) + L-glutamate + ATP = L-glutamyl-tRNA(Glu) + AMP + diphosphate. Catalyzes the attachment of glutamate to tRNA(Glu) in a two-step reaction: glutamate is first activated by ATP to form Glu-AMP and then transferred to the acceptor end of tRNA(Glu). The sequence is that of Glutamate--tRNA ligase from Natronomonas pharaonis (strain ATCC 35678 / DSM 2160 / CIP 103997 / JCM 8858 / NBRC 14720 / NCIMB 2260 / Gabara) (Halobacterium pharaonis).